The primary structure comprises 139 residues: Peptide methionine sulfoxide reductase MsrB (139 aa).

One can recognise a MsrB domain in the interval 17 to 139 (EEQWRRELSP…NSAALKLEPK (123 aa)). Residues Cys-56, Cys-59, Cys-105, and Cys-108 each coordinate Zn(2+). Cys-128 functions as the Nucleophile in the catalytic mechanism.

This sequence belongs to the MsrB Met sulfoxide reductase family. Requires Zn(2+) as cofactor.

It catalyses the reaction L-methionyl-[protein] + [thioredoxin]-disulfide + H2O = L-methionyl-(R)-S-oxide-[protein] + [thioredoxin]-dithiol. The polypeptide is Peptide methionine sulfoxide reductase MsrB (Bradyrhizobium diazoefficiens (strain JCM 10833 / BCRC 13528 / IAM 13628 / NBRC 14792 / USDA 110)).